The primary structure comprises 467 residues: Involucrin (467 aa).

Residues 48-467 (EIQEKGFPKH…ELENRTQQEK (420 aa)) form a disordered region. A compositionally biased stretch (basic and acidic residues) spans 49-75 (IQEKGFPKHEEKRPNPVKDLPDQKCEH). 2 stretches are compositionally biased toward low complexity: residues 76 to 95 (QQQPGPQKQQLQVKKSQQEL) and 105 to 177 (QQLP…VPQE). 2 stretches are compositionally biased toward basic and acidic residues: residues 178-192 (LHLRQHQEKLQDPEL) and 220-231 (RHQEPQEQELHL). Low complexity predominate over residues 278 to 290 (QQQQESPEPELQL). 5 stretches are compositionally biased toward basic and acidic residues: residues 295–318 (QSHEPDMAGDQKEKQKLHKPELYL), 348–373 (LEEKQHQKPPEPELHLGKQQESHEPD), 380–391 (EKQKLGEPELHL), 415–437 (KQEKASREQQLDYSHLEQEKELS), and 450–467 (KQLERKKHELENRTQQEK).

Belongs to the involucrin family. In terms of assembly, directly or indirectly cross-linked to cornifelin (CNFN). In terms of processing, substrate of transglutaminase. Specific glutamines or lysines are cross-linked to keratins, desmoplakin and to inter involucrin molecules. As to expression, keratinocytes of epidermis and other stratified squamous epithelia.

It localises to the cytoplasm. In terms of biological role, part of the insoluble cornified cell envelope (CE) of stratified squamous epithelia. In Mus musculus (Mouse), this protein is Involucrin (Ivl).